A 331-amino-acid polypeptide reads, in one-letter code: Centriolar satellite-associated tubulin polyglutamylase complex regulator 1 (331 aa).

The segment at 1–111 (MLSPERLALP…HCLLQLLCPD (111 aa)) is required for interaction with PCM1. Positions 1-225 (MLSPERLALP…SCPPPALVKE (225 aa)) are required for interaction with TPGS1, LRRC49, and TTLL1. The segment at 112–331 (FPLELTQKAA…STEETDESET (220 aa)) is required for interaction with TPGS2. Residues 288 to 331 (SPEASCLPSRTPPRVGSPWRPLHHSRKVDGESDGSTEETDESET) form a disordered region. The span at 318–331 (ESDGSTEETDESET) shows a compositional bias: acidic residues. Phosphoserine is present on Ser-319.

Belongs to the CSTPP1 family. In terms of assembly, interacts with PCM1. Interacts with TTLL1, TPGS1, TPGS2 and LRRC49; the interactions link CSTPP1 to the complex TPGC. Binds to alpha-tubulin.

It localises to the cytoplasm. The protein resides in the cytoskeleton. The protein localises to the microtubule organizing center. Its subcellular location is the centrosome. It is found in the centriolar satellite. Functionally, regulator of the tubulin polyglutamylase complex (TPGC) that controls cytoskeletal organization, nuclear shape, and cilium disassembly by balancing microtubule and actin assembly. Regulates the assembly and stability of the TPGC and thereby modulates polyglutamylation of the microtubule, which antagonizes MAP4 binding. This is Centriolar satellite-associated tubulin polyglutamylase complex regulator 1 from Homo sapiens (Human).